Here is a 325-residue protein sequence, read N- to C-terminus: Lipoyl synthase (325 aa).

[4Fe-4S] cluster contacts are provided by cysteine 72, cysteine 77, cysteine 83, cysteine 98, cysteine 102, cysteine 105, and serine 312. The Radical SAM core domain maps to 84-301 (FAGGTATFMI…AEEGERMGFK (218 aa)).

Belongs to the radical SAM superfamily. Lipoyl synthase family. [4Fe-4S] cluster serves as cofactor.

It localises to the cytoplasm. The enzyme catalyses [[Fe-S] cluster scaffold protein carrying a second [4Fe-4S](2+) cluster] + N(6)-octanoyl-L-lysyl-[protein] + 2 oxidized [2Fe-2S]-[ferredoxin] + 2 S-adenosyl-L-methionine + 4 H(+) = [[Fe-S] cluster scaffold protein] + N(6)-[(R)-dihydrolipoyl]-L-lysyl-[protein] + 4 Fe(3+) + 2 hydrogen sulfide + 2 5'-deoxyadenosine + 2 L-methionine + 2 reduced [2Fe-2S]-[ferredoxin]. The protein operates within protein modification; protein lipoylation via endogenous pathway; protein N(6)-(lipoyl)lysine from octanoyl-[acyl-carrier-protein]: step 2/2. In terms of biological role, catalyzes the radical-mediated insertion of two sulfur atoms into the C-6 and C-8 positions of the octanoyl moiety bound to the lipoyl domains of lipoate-dependent enzymes, thereby converting the octanoylated domains into lipoylated derivatives. The polypeptide is Lipoyl synthase (Azotobacter vinelandii (strain DJ / ATCC BAA-1303)).